Reading from the N-terminus, the 177-residue chain is Peptidyl-tRNA hydrolase 1 (177 aa).

Position 18 (tyrosine 18) interacts with tRNA. Catalysis depends on histidine 23, which acts as the Proton acceptor. TRNA contacts are provided by phenylalanine 65, asparagine 67, and asparagine 113.

This sequence belongs to the PTH family. As to quaternary structure, monomer.

It localises to the cytoplasm. It catalyses the reaction an N-acyl-L-alpha-aminoacyl-tRNA + H2O = an N-acyl-L-amino acid + a tRNA + H(+). Hydrolyzes ribosome-free peptidyl-tRNAs (with 1 or more amino acids incorporated), which drop off the ribosome during protein synthesis, or as a result of ribosome stalling. In terms of biological role, catalyzes the release of premature peptidyl moieties from peptidyl-tRNA molecules trapped in stalled 50S ribosomal subunits, and thus maintains levels of free tRNAs and 50S ribosomes. The protein is Peptidyl-tRNA hydrolase 1 of Corynebacterium glutamicum (strain ATCC 13032 / DSM 20300 / JCM 1318 / BCRC 11384 / CCUG 27702 / LMG 3730 / NBRC 12168 / NCIMB 10025 / NRRL B-2784 / 534).